A 586-amino-acid chain; its full sequence is Probable transporter AQR1 (586 aa).

Disordered regions lie at residues 1 to 44 (MSRS…FEGA) and 61 to 82 (EGDL…PTQQ). Over 1-99 (MSRSNSIYTE…PYTLLSYGQK (99 aa)) the chain is Extracellular. Residues 19-40 (NEQHLTREYTKPDGQTKSEKLN) show a composition bias toward basic and acidic residues. Residues 100-120 (WGMVAILTMCGFWSSLGSPIY) traverse the membrane as a helical segment. Over 121–139 (YPALRQLEKQFNVDENMVN) the chain is Cytoplasmic. A helical transmembrane segment spans residues 140 to 160 (VTVVVYLLFQGISPTVSGGLA). Over 161-166 (DCFGRR) the chain is Extracellular. Residues 167-187 (PIILAGMLIYVIASIGLACAP) form a helical membrane-spanning segment. A topological domain (cytoplasmic) is located at residue S188. Residues 189–209 (YGVIIFLRCIQSIGISPTIAI) form a helical membrane-spanning segment. At 210-225 (SSGVVGDFTLKHERGT) the chain is on the extracellular side. Residues 226 to 246 (FVGATSGFVLLGQCFGSLIGA) form a helical membrane-spanning segment. At 247 to 255 (VLTARWDWR) the chain is on the cytoplasmic side. Residues 256–276 (AIFWFLTIGCGSCFLIAFLIL) form a helical membrane-spanning segment. The Extracellular portion of the chain corresponds to 277–334 (PETKRTIAGNLSIKPKRFINRAPIFLLGPVRRRFKYDNPDYETLDPTIPKLDLSSAGK). Residues 335–355 (ILVLPEIILSLFPSGLLFAMW) traverse the membrane as a helical segment. Over 356 to 374 (TLMLSSISSGLSVAPYNYH) the chain is Cytoplasmic. Residues 375-395 (LVIIGVCYLPGGIGGLMGSFF) form a helical membrane-spanning segment. Residues 396-433 (TGRIIDMYFKRKIKKFEQDKANGLIPQDAEINMFKVRL) lie on the Extracellular side of the membrane. Residues 434–454 (VCLLPQNFLAVVAYLLFGWSI) traverse the membrane as a helical segment. Topologically, residues 455–459 (DKGWR) are cytoplasmic. The chain crosses the membrane as a helical span at residues 460–480 (IESILITSFVCSYCAMSTLST). Residues 481-523 (STTLLVDLYPTKSSTASSCFNFVRCSLSTIFMGCFAKMKAAMT) are Extracellular-facing. The chain crosses the membrane as a helical span at residues 524–544 (VGGTFTFLCALVFFFNFLMFI). At 545–586 (PMKYGMKWREDRLLKQQRQSWLNTLAVKAKKGTKRDQNDNHN) the chain is on the cytoplasmic side.

It belongs to the major facilitator superfamily. CAR1 family.

The protein localises to the membrane. Its function is as follows. Probable transporter that confers resistance to short-chain monocarboxylic acids and quinidine. The protein is Probable transporter AQR1 (AQR1) of Saccharomyces cerevisiae (strain ATCC 204508 / S288c) (Baker's yeast).